Here is a 524-residue protein sequence, read N- to C-terminus: FAD-dependent monooxygenase opdD (524 aa).

The FAD site is built by Glu-48 and Arg-145.

This sequence belongs to the paxM FAD-dependent monooxygenase family.

It participates in secondary metabolite biosynthesis. Its function is as follows. FAD-dependent monooxygenase; part of the gene cluster that mediates the biosynthesis of oxopyrrolidines, polyketide-amino acid hybrid compounds with feature structures of tetramic acid. Does not seem to play a role in oxopyrrolidines A and B biosynthesis. May be involved in further modifications of these oxopyrrolidines. This is FAD-dependent monooxygenase opdD from Penicillium oxalicum (strain 114-2 / CGMCC 5302) (Penicillium decumbens).